A 115-amino-acid chain; its full sequence is Putative UPF0377 protein YHL045W (115 aa).

The helical transmembrane segment at 10–30 (ACIFIDSVCEGIVFWGLCLFV) threads the bilayer.

This sequence belongs to the UPF0377 family.

It is found in the membrane. The protein is Putative UPF0377 protein YHL045W of Saccharomyces cerevisiae (strain ATCC 204508 / S288c) (Baker's yeast).